The primary structure comprises 908 residues: Mechanosensitive ion channel protein 8 (908 aa).

Residues 1–25 (MDFRNSFKSHSSYKQIRSPGDQSEP) show a composition bias toward polar residues. Disordered regions lie at residues 1–88 (MDFR…HTAV), 148–172 (DQEN…SFDA), 190–221 (VAGS…LQEE), and 242–265 (VKTR…WRSG). The span at 31–70 (PILHDHHPDHSGMVVDDQKPDSTRSSLDDGRNAPVERDAS) shows a compositional bias: basic and acidic residues. Composition is skewed to polar residues over residues 75–85 (QDNTTGTSTDH) and 156–171 (HQTM…TSFD). A compositionally biased stretch (low complexity) spans 196 to 206 (SSSSHSSSSSS). Polar residues predominate over residues 207 to 218 (ATMRTNQDQPQL). Over residues 247–256 (RLQDPPREEE) the composition is skewed to basic and acidic residues. 6 helical membrane passes run 298 to 318 (AITL…ACSL), 341 to 361 (LVLI…VFFI), 381 to 401 (AVQN…LFDK), 411 to 431 (FLPY…LWLI), 673 to 693 (MINI…LEIA), and 709 to 729 (AFIF…LFIV).

Belongs to the MscS (TC 1.A.23) family. Expressed in tricellular and mature pollen, and in germinating tube. Not detected in leaves or roots.

The protein resides in the cell membrane. It localises to the endomembrane system. With respect to regulation, not regulated by MgCl(2), ruthenium red or tetramethylammonium-Cl. Mechanosensitive channel that opens in response to stretch forces in the membrane lipid bilayer. Exhibits a 6.3-fold preference for chloride over sodium. Regulates osmotic forces during pollen hydration and germination. This Arabidopsis thaliana (Mouse-ear cress) protein is Mechanosensitive ion channel protein 8.